A 97-amino-acid chain; its full sequence is MKIKIDESYLSKLEQLALIRLKNEEKDKISNDLQRIIDFFEKINELELKDVEPLFHPISSGKLRKDEPLKPLNRDEALQNVKRKENGYIVGPRTYGE.

The protein belongs to the GatC family. Heterotrimer of A, B and C subunits.

It carries out the reaction L-glutamyl-tRNA(Gln) + L-glutamine + ATP + H2O = L-glutaminyl-tRNA(Gln) + L-glutamate + ADP + phosphate + H(+). The catalysed reaction is L-aspartyl-tRNA(Asn) + L-glutamine + ATP + H2O = L-asparaginyl-tRNA(Asn) + L-glutamate + ADP + phosphate + 2 H(+). Functionally, allows the formation of correctly charged Asn-tRNA(Asn) or Gln-tRNA(Gln) through the transamidation of misacylated Asp-tRNA(Asn) or Glu-tRNA(Gln) in organisms which lack either or both of asparaginyl-tRNA or glutaminyl-tRNA synthetases. The reaction takes place in the presence of glutamine and ATP through an activated phospho-Asp-tRNA(Asn) or phospho-Glu-tRNA(Gln). The polypeptide is Aspartyl/glutamyl-tRNA(Asn/Gln) amidotransferase subunit C (Sulfolobus acidocaldarius (strain ATCC 33909 / DSM 639 / JCM 8929 / NBRC 15157 / NCIMB 11770)).